The following is a 210-amino-acid chain: Putative 3-methyladenine DNA glycosylase (210 aa).

The tract at residues 180-210 (SRPPPGAAAARAARAPAAPAPRPRRPRGSGP) is disordered. The segment covering 186-196 (AAAARAARAPA) has biased composition (low complexity). Positions 201 to 210 (RPRRPRGSGP) are enriched in basic residues.

This sequence belongs to the DNA glycosylase MPG family.

This chain is Putative 3-methyladenine DNA glycosylase, found in Anaeromyxobacter dehalogenans (strain 2CP-1 / ATCC BAA-258).